Reading from the N-terminus, the 182-residue chain is Carbonic anhydrase (182 aa).

Positions 64, 81, and 86 each coordinate Mg(2+).

This sequence belongs to the gamma-class carbonic anhydrase family. As to quaternary structure, homotrimer. Mg(2+) is required as a cofactor. Requires Zn(2+) as cofactor.

The catalysed reaction is hydrogencarbonate + H(+) = CO2 + H2O. Reversible hydration of carbon dioxide. This chain is Carbonic anhydrase, found in Geobacillus kaustophilus (strain HTA426).